Here is a 441-residue protein sequence, read N- to C-terminus: Probable D-serine dehydratase (441 aa).

Lys101 is modified (N6-(pyridoxal phosphate)lysine).

It belongs to the serine/threonine dehydratase family. DsdA subfamily. Pyridoxal 5'-phosphate is required as a cofactor.

It carries out the reaction D-serine = pyruvate + NH4(+). In Geobacillus kaustophilus (strain HTA426), this protein is Probable D-serine dehydratase.